Reading from the N-terminus, the 387-residue chain is Homoserine O-succinyltransferase (387 aa).

Residues Asn-49–Leu-358 form the AB hydrolase-1 domain. The active-site Nucleophile is Ser-156. Position 226 (Arg-226) interacts with substrate. Active-site residues include Asp-321 and His-354. Substrate is bound at residue Asp-355.

This sequence belongs to the AB hydrolase superfamily. MetX family. Homodimer.

The protein localises to the cytoplasm. It catalyses the reaction L-homoserine + succinyl-CoA = O-succinyl-L-homoserine + CoA. It functions in the pathway amino-acid biosynthesis; L-methionine biosynthesis via de novo pathway; O-succinyl-L-homoserine from L-homoserine: step 1/1. Its activity is regulated as follows. Requires MetW for activity. Transfers a succinyl group from succinyl-CoA to L-homoserine, forming succinyl-L-homoserine. The polypeptide is Homoserine O-succinyltransferase (Acinetobacter baylyi (strain ATCC 33305 / BD413 / ADP1)).